Reading from the N-terminus, the 660-residue chain is Probable Xaa-Pro aminopeptidase PTRG_10574 (660 aa).

Residues aspartate 274, aspartate 285, glutamate 435, and glutamate 476 each coordinate Mn(2+). Residues 641 to 660 (SAGSGSTPLWKPHNKQDKKN) are disordered.

Belongs to the peptidase M24B family. Mn(2+) serves as cofactor.

It catalyses the reaction Release of any N-terminal amino acid, including proline, that is linked to proline, even from a dipeptide or tripeptide.. Its function is as follows. Catalyzes the removal of a penultimate prolyl residue from the N-termini of peptides. This is Probable Xaa-Pro aminopeptidase PTRG_10574 from Pyrenophora tritici-repentis (strain Pt-1C-BFP) (Wheat tan spot fungus).